The sequence spans 356 residues: UDP-N-acetylenolpyruvoylglucosamine reductase (356 aa).

Residues 19-227 (LGGPAARFCS…RDAVLSLRRS (209 aa)) enclose the FAD-binding PCMH-type domain. R167 is a catalytic residue. The Proton donor role is filled by S244. The active site involves E348.

It belongs to the MurB family. FAD is required as a cofactor.

The protein resides in the cytoplasm. It catalyses the reaction UDP-N-acetyl-alpha-D-muramate + NADP(+) = UDP-N-acetyl-3-O-(1-carboxyvinyl)-alpha-D-glucosamine + NADPH + H(+). It functions in the pathway cell wall biogenesis; peptidoglycan biosynthesis. Functionally, cell wall formation. This Thermobifida fusca (strain YX) protein is UDP-N-acetylenolpyruvoylglucosamine reductase.